The following is a 226-amino-acid chain: Ribonuclease 3 (226 aa).

The 123-residue stretch at 7-129 folds into the RNase III domain; the sequence is DARLQQALGY…LFGAVFLDAG (123 aa). Residue Glu-42 participates in Mg(2+) binding. Asp-46 is a catalytic residue. Positions 115 and 118 each coordinate Mg(2+). Glu-118 is a catalytic residue. Positions 156-226 constitute a DRBM domain; the sequence is DPKTRLQEIL…ARQACAELQR (71 aa).

Belongs to the ribonuclease III family. In terms of assembly, homodimer. Mg(2+) serves as cofactor.

The protein resides in the cytoplasm. It catalyses the reaction Endonucleolytic cleavage to 5'-phosphomonoester.. In terms of biological role, digests double-stranded RNA. Involved in the processing of primary rRNA transcript to yield the immediate precursors to the large and small rRNAs (23S and 16S). Processes some mRNAs, and tRNAs when they are encoded in the rRNA operon. Processes pre-crRNA and tracrRNA of type II CRISPR loci if present in the organism. This chain is Ribonuclease 3, found in Thiobacillus denitrificans (strain ATCC 25259 / T1).